Consider the following 184-residue polypeptide: Photosystem I assembly protein Ycf4 (184 aa).

A run of 2 helical transmembrane segments spans residues 22–42 and 57–77; these read VCWAFILFLGSLGFLLVGTSS and IIFFPQGIVMSFYGIAGLFIS.

Belongs to the Ycf4 family.

The protein localises to the plastid. Its subcellular location is the chloroplast thylakoid membrane. Seems to be required for the assembly of the photosystem I complex. This Morus indica (Mulberry) protein is Photosystem I assembly protein Ycf4.